The primary structure comprises 301 residues: F1 operon positive regulatory protein (301 aa).

The HTH araC/xylS-type domain occupies 8 to 107 (NSIIQYIEEN…GYTPRQYRMI (100 aa)). 2 DNA-binding regions (H-T-H motif) span residues 26-47 (DCLV…KEYV) and 74-97 (IIEI…KKIF).

Positive regulator of F1 operon expression. The polypeptide is F1 operon positive regulatory protein (caf1R) (Yersinia pestis).